Consider the following 66-residue polypeptide: Putative transmembrane protein ORF66 (66 aa).

Residues Met1 to Asp6 lie on the Cytoplasmic side of the membrane. The chain crosses the membrane as a helical span at residues Thr7–Val27. The Extracellular portion of the chain corresponds to Ser28–Glu39. Residues Tyr40 to Gly60 form a helical membrane-spanning segment. Residues Lys61–Ser66 are Cytoplasmic-facing.

It localises to the host membrane. The sequence is that of Putative transmembrane protein ORF66 from Acidianus filamentous virus 2 (isolate Italy/Pozzuoli) (AFV-2).